The primary structure comprises 435 residues: Serine/threonine-protein kinase ssn3 (435 aa).

Residues 49-377 (YRIVGFISSG…AREALEHPYF (329 aa)) enclose the Protein kinase domain. ATP is bound by residues 55 to 63 (ISSGTYGRV) and Lys-79. Asp-181 serves as the catalytic Proton acceptor. A compositionally biased stretch (basic and acidic residues) spans 398–407 (RRVTQDDNDI). Residues 398–435 (RRVTQDDNDIRSGSLPGTKRSGLPDDSLMGRASKRIKE) form a disordered region.

The protein belongs to the protein kinase superfamily. CMGC Ser/Thr protein kinase family. CDC2/CDKX subfamily. As to quaternary structure, component of the srb8-11 complex, a regulatory module of the Mediator complex. Requires Mg(2+) as cofactor.

The protein localises to the nucleus. It catalyses the reaction L-seryl-[protein] + ATP = O-phospho-L-seryl-[protein] + ADP + H(+). The catalysed reaction is L-threonyl-[protein] + ATP = O-phospho-L-threonyl-[protein] + ADP + H(+). It carries out the reaction [DNA-directed RNA polymerase] + ATP = phospho-[DNA-directed RNA polymerase] + ADP + H(+). Functionally, component of the srb8-11 complex. The srb8-11 complex is a regulatory module of the Mediator complex which is itself involved in regulation of basal and activated RNA polymerase II-dependent transcription. The srb8-11 complex may be involved in the transcriptional repression of a subset of genes regulated by Mediator. It may inhibit the association of the Mediator complex with RNA polymerase II to form the holoenzyme complex. The srb8-11 complex phosphorylates the C-terminal domain (CTD) of the largest subunit of RNA polymerase II. This Aspergillus terreus (strain NIH 2624 / FGSC A1156) protein is Serine/threonine-protein kinase ssn3 (ssn3).